Here is a 201-residue protein sequence, read N- to C-terminus: Ubiquinone biosynthesis accessory factor UbiJ (201 aa).

One can recognise an SCP2 domain in the interval 15–112 (LNTFLYRSPA…QVVQNFVALA (98 aa)).

Belongs to the UbiJ family.

It localises to the cytoplasm. Its pathway is cofactor biosynthesis; ubiquinone biosynthesis. Functionally, required for ubiquinone (coenzyme Q) biosynthesis under aerobic conditions. Binds hydrophobic ubiquinone biosynthetic intermediates via its SCP2 domain and is essential for the stability of the Ubi complex. May constitute a docking platform where Ubi enzymes assemble and access their SCP2-bound polyprenyl substrates. Required for intracellular proliferation in macrophages. This chain is Ubiquinone biosynthesis accessory factor UbiJ, found in Salmonella typhimurium (strain LT2 / SGSC1412 / ATCC 700720).